An 898-amino-acid chain; its full sequence is Sodium/hydrogen exchanger 5 (898 aa).

The Cytoplasmic segment spans residues 1 to 48 (MLSAALLLLPGLPLAGAGATEEPTQESGPLGEPPPGLALFRWQWHEVE). A helical transmembrane segment spans residues 49 to 69 (APYLVALWILVASLAKIVFHL). Residues 70-76 (SRKVTSL) are Extracellular-facing. A helical transmembrane segment spans residues 77–97 (VPESCLLILLGLVLGGIVLAV). Topologically, residues 98–106 (AKKAEYQLE) are cytoplasmic. A helical transmembrane segment spans residues 107–127 (PGTFFLFLLPPIVLDSGYFMP). Residues 128-137 (SRLFFDNLGA) are Extracellular-facing. Residues 138–158 (ILTYAVVGTLWNAFTTGVALW) form a helical membrane-spanning segment. Topologically, residues 159–176 (GLQQAGLVAPRVQAGLLD) are cytoplasmic. A helical transmembrane segment spans residues 177–197 (FLLFGSLISAVDPVAVLAVFE). The Extracellular portion of the chain corresponds to 198–203 (EVHVNQ). A helical transmembrane segment spans residues 204-224 (TLFIIIFGESLLNDAVTVVLY). Topologically, residues 225–249 (KVCNSFVEMGSANVQATDYLKGVAS) are cytoplasmic. Residues 250-270 (LFVVSLGGAAVGLVFAFLLAL) form a helical membrane-spanning segment. The Extracellular segment spans residues 271 to 279 (TTRFTKRVR). The chain crosses the membrane as a helical span at residues 280-300 (IIEPLLVFLLAYAAYLTAEMA). Residues 301–334 (SLSAILAVTMCGLGCKKYVEANISHKSRTAVKYT) lie on the Cytoplasmic side of the membrane. Residues 335–355 (MKTLASCAETVIFMLLGISAV) form a helical membrane-spanning segment. The Extracellular portion of the chain corresponds to 356–363 (DSSKWAWD). A helical transmembrane segment spans residues 364–384 (SGLVLGTLFFILFFRALGVVL). The Cytoplasmic portion of the chain corresponds to 385-401 (QTWALNQFRLVPLDKID). A helical membrane pass occupies residues 402–422 (QVVMSYGGLRGAVAFALVILL). Over 423 to 431 (DRTKVPAKD) the chain is Extracellular. Residues 432–452 (YFVATTIVVVFFTVIVQGLTI) traverse the membrane as a helical segment. Residues 453–898 (KPLVKWLRVK…CIQFNRGGRL (446 aa)) are Cytoplasmic-facing. Disordered stretches follow at residues 660–693 (FTKS…RDLG) and 826–866 (EEPQ…PQQE). Basic residues predominate over residues 663–675 (SKPRPRKTSHKKK). A compositionally biased stretch (polar residues) spans 857 to 866 (ESSADIPQQE).

The protein belongs to the monovalent cation:proton antiporter 1 (CPA1) transporter (TC 2.A.36) family. As to quaternary structure, interacts with CHP1 and CHP2. Interacts with ARRB2; facilitates the endocytosis of SLC9A5 from the plasma membrane. Interacts with RACK1; this interaction positively regulates SLC9A5 activity and promote SLC9A5 localization to focal adhesions. Interacts with SCAMP2; this interaction regulates SLC9A5 cell-surface targeting and SLC9A5 activity. Phosphorylated by PRKAA2; promotes its accumulation at the cell surface. Phosphorylated by CSNK2A1 in a manner favoring its beta-arrestin binding and endocytosis. As to expression, highest expression level is detected in brain. Expressed in hippocampal neurons (at protein level).

It localises to the cell membrane. The protein resides in the recycling endosome membrane. The protein localises to the cell projection. Its subcellular location is the dendritic spine membrane. It is found in the synaptic cell membrane. It localises to the cell junction. The protein resides in the focal adhesion. The catalysed reaction is Na(+)(in) + H(+)(out) = Na(+)(out) + H(+)(in). Its function is as follows. Plasma membrane Na(+)/H(+) antiporter. Mediates the electroneutral exchange of intracellular H(+) ions for extracellular Na(+) in 1:1 stoichiometry. Responsible for regulating intracellular pH homeostasis, in particular in neural tissues. Acts as a negative regulator of dendritic spine growth. Plays a role in postsynaptic remodeling and signaling. Can also contribute to organellar pH regulation, with consequences for receptor tyrosine kinase trafficking. This Mus musculus (Mouse) protein is Sodium/hydrogen exchanger 5 (Slc9a5).